We begin with the raw amino-acid sequence, 236 residues long: Urease accessory protein UreF (236 aa).

It belongs to the UreF family. In terms of assembly, ureD, UreF and UreG form a complex that acts as a GTP-hydrolysis-dependent molecular chaperone, activating the urease apoprotein by helping to assemble the nickel containing metallocenter of UreC. The UreE protein probably delivers the nickel.

The protein resides in the cytoplasm. Required for maturation of urease via the functional incorporation of the urease nickel metallocenter. The chain is Urease accessory protein UreF from Granulibacter bethesdensis (strain ATCC BAA-1260 / CGDNIH1).